The following is a 1042-amino-acid chain: Sarcoplasmic/endoplasmic reticulum calcium ATPase 2 (1042 aa).

Topologically, residues 1–48 are cytoplasmic; the sequence is MENAHTKTVEEVLGHFGVNESTGLSLEQVKKLKERWGSNELPAEEGKT. Ser38 carries the post-translational modification Phosphoserine. The helical transmembrane segment at 49-69 threads the bilayer; sequence LLELVIEQFEDLLVRILLLAA. At 70 to 89 the chain is on the lumenal side; that stretch reads CISFVLAWFEEGEETITAFV. The chain crosses the membrane as a helical span at residues 90-110; sequence EPFVILLILVANAIVGVWQER. Residues 111 to 253 are Cytoplasmic-facing; the sequence is NAENAIEALK…QERTPLQQKL (143 aa). The helical transmembrane segment at 254–273 threads the bilayer; that stretch reads DEFGEQLSKVISLICIAVWI. The Lumenal portion of the chain corresponds to 274–295; that stretch reads INIGHFNDPVHGGSWIRGAIYY. Tyr294 and Tyr295 each carry 3'-nitrotyrosine. The helical transmembrane segment at 296–313 threads the bilayer; that stretch reads FKIAVALAVAAIPEGLPA. Residues Val304, Ala305, Ile307, and Glu309 each coordinate Ca(2+). The Cytoplasmic portion of the chain corresponds to 314-756; sequence VITTCLALGT…EEGRAIYNNM (443 aa). The active-site 4-aspartylphosphate intermediate is Asp351. Mg(2+) is bound by residues Asp351 and Thr353. Thr353 contributes to the ATP binding site. The residue at position 441 (Thr441) is a Phosphothreonine. Glu442, Arg489, and Lys514 together coordinate ATP. At Ser531 the chain carries Phosphoserine. Arg559 lines the ATP pocket. The interval 575–594 is interaction with HAX1; that stretch reads MHLKDSANFIKYETNLTFVG. A Phosphoserine modification is found at Ser580. 3 residues coordinate ATP: Thr624, Gly625, and Asp626. Ser663 bears the Phosphoserine mark. Positions 677 and 683 each coordinate ATP. Asp702 is a Mg(2+) binding site. Asn705 contacts ATP. Residues 757–776 traverse the membrane as a helical segment; sequence KQFIRYLISSNVGEVVCIFL. Residues Asn767 and Glu770 each coordinate Ca(2+). Topologically, residues 777–786 are lumenal; sequence TAALGFPEAL. Residues 787 to 807 form a helical membrane-spanning segment; the sequence is IPVQLLWVNLVTDGLPATALG. The segment at 787-807 is interaction with PLN; it reads IPVQLLWVNLVTDGLPATALG. An interaction with TMEM64 and PDIA3 region spans residues 788-1042; it reads PVQLLWVNLV…DTNFSDLLWS (255 aa). Residues Asn795, Thr798, and Asp799 each contribute to the Ca(2+) site. The Cytoplasmic segment spans residues 808 to 827; it reads FNPPDLDIMNKPPRNPKEPL. A helical membrane pass occupies residues 828–850; that stretch reads ISGWLFFRYLAIGCYVGAATVGA. Residues 851 to 896 are Lumenal-facing; that stretch reads AAWWFIAADGGPRVSFYQLSHFLQCKEDNPDFEGVDCAIFESPYPM. Cys875 and Cys887 form a disulfide bridge. The helical transmembrane segment at 897–916 threads the bilayer; that stretch reads TMALSVLVTIEMCNALNSLS. Glu907 lines the Ca(2+) pocket. Topologically, residues 917–929 are cytoplasmic; the sequence is ENQSLLRMPPWEN. The helical transmembrane segment at 930 to 948 threads the bilayer; the sequence is IWLVGSICLSMSLHFLILY. Residues 931–942 form an interaction with PLN region; that stretch reads WLVGSICLSMSL. Residues 949-963 are Lumenal-facing; it reads VEPLPLIFQITPLNV. A helical transmembrane segment spans residues 964–984; sequence TQWLMVLKISLPVILMDETLK. Over 985–1042 the chain is Cytoplasmic; sequence FVARNYLEPGKECVQPAPQSCSLWACTEGVSWPFVLLIVPLVMWVYSTDTNFSDLLWS.

It belongs to the cation transport ATPase (P-type) (TC 3.A.3) family. Type IIA subfamily. As to quaternary structure, interacts with sarcolipin (SLN); the interaction inhibits ATP2A2 Ca(2+) affinity. Interacts with phospholamban (PLN); the interaction inhibits ATP2A2 Ca(2+) affinity. Interacts with myoregulin (MRLN). Interacts with ARLN and ERLN; the interactions inhibit ATP2A2 Ca(2+) affinity. Interacts with SRTIT1/DWORF; the interaction results in activation of ATP2A2. Interacts with the monomeric forms of SLN, PLN, ARLN, ERLN and STRI1/DWORF. Interacts with HAX1. Interacts with S100A8 and S100A9. Interacts with SLC35G1 and STIM1. Interacts with TMEM203. Interacts with TMEM64 and PDIA3. Interacts with TMX1. Interacts with TMX2. Interacts with VMP1; VMP1 competes with PLN and SLN to prevent them from forming an inhibitory complex with ATP2A2. Interacts with ULK1. Interacts with TUNAR. Interacts with FLVCR2; this interaction occurs in the absence of heme and promotes ATP2A2 proteasomal degradation; this complex is dissociated upon heme binding. Interacts with FNIP1. Interacts with TRAM2 (via C-terminus). The cofactor is Mg(2+). In terms of processing, nitrated under oxidative stress. Nitration on the two tyrosine residues inhibits catalytic activity. Serotonylated on Gln residues by TGM2 in response to hypoxia, leading to its inactivation. As to expression, isoform 2 is highly expressed in heart and slow twitch skeletal muscle. Isoform 1 is widely expressed.

Its subcellular location is the endoplasmic reticulum membrane. It is found in the sarcoplasmic reticulum membrane. The catalysed reaction is Ca(2+)(in) + ATP + H2O = Ca(2+)(out) + ADP + phosphate + H(+). With respect to regulation, has different conformational states with differential Ca2+ affinity. The E1 conformational state (active form) shows high Ca(2+) affinity, while the E2 state exhibits low Ca(2+) affinity. Binding of ATP allosterically increases its affinity for subsequent binding of Ca2+. Reversibly inhibited by phospholamban (PLN) at low calcium concentrations. PLN inhibits ATP2A2 Ca(2+) affinity by disrupting its allosteric activation by ATP. Inhibited by sarcolipin (SLN) and myoregulin (MRLN). The inhibition is blocked by VMP1. Enhanced by STRIT1/DWORF; STRIT1 increases activity by displacing sarcolipin (SLN), phospholamban (PLN) and myoregulin (MRLN). Stabilizes SERCA2 in its E2 state. This magnesium-dependent enzyme catalyzes the hydrolysis of ATP coupled with the translocation of calcium from the cytosol to the sarcoplasmic reticulum lumen. Involved in autophagy in response to starvation. Upon interaction with VMP1 and activation, controls ER-isolation membrane contacts for autophagosome formation. Also modulates ER contacts with lipid droplets, mitochondria and endosomes. In coordination with FLVCR2 mediates heme-stimulated switching from mitochondrial ATP synthesis to thermogenesis. Functionally, involved in the regulation of the contraction/relaxation cycle. Acts as a regulator of TNFSF11-mediated Ca(2+) signaling pathways via its interaction with TMEM64 which is critical for the TNFSF11-induced CREB1 activation and mitochondrial ROS generation necessary for proper osteoclast generation. Association between TMEM64 and SERCA2 in the ER leads to cytosolic Ca(2+) spiking for activation of NFATC1 and production of mitochondrial ROS, thereby triggering Ca(2+) signaling cascades that promote osteoclast differentiation and activation. The sequence is that of Sarcoplasmic/endoplasmic reticulum calcium ATPase 2 (ATP2A2) from Oryctolagus cuniculus (Rabbit).